Reading from the N-terminus, the 393-residue chain is Methylthioribose kinase (393 aa).

ATP contacts are provided by residues asparagine 38, lysine 53, and glutamate 107–leucine 109. Aspartate 225 contributes to the substrate binding site. Aspartate 242–glutamate 244 lines the ATP pocket. A substrate-binding site is contributed by arginine 332.

This sequence belongs to the methylthioribose kinase family. In terms of assembly, homodimer.

It catalyses the reaction 5-(methylsulfanyl)-D-ribose + ATP = 5-(methylsulfanyl)-alpha-D-ribose 1-phosphate + ADP + H(+). It functions in the pathway amino-acid biosynthesis; L-methionine biosynthesis via salvage pathway; S-methyl-5-thio-alpha-D-ribose 1-phosphate from S-methyl-5'-thioadenosine (hydrolase route): step 2/2. Its function is as follows. Catalyzes the phosphorylation of methylthioribose into methylthioribose-1-phosphate. This is Methylthioribose kinase from Bacillus thuringiensis subsp. konkukian (strain 97-27).